The sequence spans 336 residues: UPF0324 membrane protein BT_1919 (336 aa).

8 consecutive transmembrane segments (helical) span residues 2–19 (LHGVLLIALFSCAAFYIG), 23–45 (FVRSISFSPMIVGIILGMLYANS), 85–107 (IGLPAMLIDVIIVAVTICGGIYL), 117–134 (IALLTSIGSGICGAAAIL), 147–169 (TAVSVSTVVIFGTISMFLYPFLY), 210–232 (AIIVKMIRVMMLVPVLLITTYLV), 253–275 (WFAIGFMGVIAFNSFDLLPAQLV), and 310–332 (FVLALLLYVWLVVGGYFLVKYLT).

The protein belongs to the UPF0324 family.

The protein localises to the cell membrane. This Bacteroides thetaiotaomicron (strain ATCC 29148 / DSM 2079 / JCM 5827 / CCUG 10774 / NCTC 10582 / VPI-5482 / E50) protein is UPF0324 membrane protein BT_1919.